The following is a 42-amino-acid chain: Photosystem I reaction center subunit IX (42 aa).

The chain crosses the membrane as a helical span at residues 7-27 (YLSVAPVLATLWFGSLAGLLI).

The protein belongs to the PsaJ family.

It localises to the plastid. The protein resides in the chloroplast thylakoid membrane. Functionally, may help in the organization of the PsaE and PsaF subunits. The protein is Photosystem I reaction center subunit IX of Chloranthus spicatus (Chulantree).